Consider the following 197-residue polypeptide: Imidazoleglycerol-phosphate dehydratase (197 aa).

Belongs to the imidazoleglycerol-phosphate dehydratase family.

It is found in the cytoplasm. It carries out the reaction D-erythro-1-(imidazol-4-yl)glycerol 3-phosphate = 3-(imidazol-4-yl)-2-oxopropyl phosphate + H2O. It participates in amino-acid biosynthesis; L-histidine biosynthesis; L-histidine from 5-phospho-alpha-D-ribose 1-diphosphate: step 6/9. This is Imidazoleglycerol-phosphate dehydratase from Marinomonas sp. (strain MWYL1).